Consider the following 333-residue polypeptide: Altered inheritance of mitochondria protein 23, mitochondrial (333 aa).

The N-terminal 28 residues, 1 to 28, are a transit peptide targeting the mitochondrion; sequence MFRQIPKFSVIRASCFASRCFYSSKSSN. 2 disordered regions span residues 43–80 and 296–333; these read TNRS…GKER and QPKK…ESKA. 2 stretches are compositionally biased toward basic and acidic residues: residues 71 to 80 and 297 to 333; these read RHINQTGKER and PKKD…ESKA.

The protein belongs to the AIM23 family.

The protein resides in the mitochondrion. The sequence is that of Altered inheritance of mitochondria protein 23, mitochondrial (AIM23) from Komagataella phaffii (strain GS115 / ATCC 20864) (Yeast).